Here is a 1706-residue protein sequence, read N- to C-terminus: Histone acetyltransferase HAC12 (1706 aa).

Disordered stretches follow at residues 1–33, 251–284, 397–456, and 524–543; these read MNVQ…MQNL, TNNN…NSHM, VSRV…LGKT, and QNSQ…SDSS. A compositionally biased stretch (polar residues) spans 397–406; sequence VSRVNSSLSH. Over residues 407–434 the composition is skewed to low complexity; the sequence is QQQFQQPPNRFQQQPNQIQQQQQQFLNQ. A TAZ-type 1 zinc finger spans residues 637–716; it reads HDPKFKNQQR…DPRCPVCVPV (80 aa). Residues 791 to 909 are disordered; it reads TESCKSSIVS…PELTSKSRKP (119 aa). Positions 794 to 805 are enriched in polar residues; it reads CKSSIVSTTEAD. Basic and acidic residues-rich tracts occupy residues 809-829 and 870-896; these read DAER…KVEI and PKQE…KEEL. Residues 998–1075 form a PHD-type zinc finger; the sequence is HYFCIPCYNE…EYTCPYCYVI (78 aa). Residues 1090–1526 form the CBP/p300-type HAT domain; the sequence is VLGAKDLPRT…VLYHLHNPTA (437 aa). Residues 1213 to 1215, 1232 to 1233, and tryptophan 1288 each bind acetyl-CoA; these read LDS and RT. ZZ-type zinc fingers lie at residues 1408 to 1471 and 1528 to 1581; these read HLQH…IADI and AFVT…SLAD. Zn(2+) contacts are provided by cysteine 1413, cysteine 1416, cysteine 1428, cysteine 1431, cysteine 1437, cysteine 1440, histidine 1453, histidine 1461, cysteine 1533, cysteine 1536, cysteine 1548, cysteine 1551, cysteine 1557, cysteine 1560, histidine 1569, and histidine 1571. The TAZ-type 2 zinc finger occupies 1588 to 1671; sequence EARQLRVLQL…ECDVPRCGDL (84 aa).

It is found in the nucleus. It catalyses the reaction L-lysyl-[protein] + acetyl-CoA = N(6)-acetyl-L-lysyl-[protein] + CoA + H(+). In terms of biological role, acetyltransferase enzyme. Acetylates histones, giving a specific tag for transcriptional activation. The polypeptide is Histone acetyltransferase HAC12 (HAC12) (Arabidopsis thaliana (Mouse-ear cress)).